The chain runs to 473 residues: Purple acid phosphatase 1 (473 aa).

An N-terminal signal peptide occupies residues 1-38 (MRLVVVGLWCLILGLILNPTKFCDAGVTSSYVRKSLSA). A glycan (N-linked (GlcNAc...) asparagine) is linked at asparagine 118. Aspartate 172 lines the Fe cation pocket. The N-linked (GlcNAc...) asparagine glycan is linked to asparagine 180. 2 residues coordinate Fe cation: aspartate 201 and tyrosine 204. Aspartate 201 is a Mn(2+) binding site. Asparagine 238 lines the Mn(2+) pocket. Asparagine 238 serves as a coordination point for substrate. Asparagine 311 is a glycosylation site (N-linked (GlcNAc...) asparagine). Histidine 323 provides a ligand contact to Mn(2+). Catalysis depends on histidine 333, which acts as the Proton donor. Histidine 360 lines the Mn(2+) pocket. 360 to 362 (HVH) contacts substrate. Residue histidine 362 participates in Fe cation binding. Asparagine 433 is a glycosylation site (N-linked (GlcNAc...) asparagine).

It belongs to the metallophosphoesterase superfamily. Purple acid phosphatase family. Homodimer; disulfide-linked. Requires Fe cation as cofactor. Mn(2+) serves as cofactor. The cofactor is Zn(2+). It depends on Cu(2+) as a cofactor. Mg(2+) is required as a cofactor.

The protein localises to the secreted. It carries out the reaction a phosphate monoester + H2O = an alcohol + phosphate. This chain is Purple acid phosphatase 1 (PAP1), found in Ipomoea batatas (Sweet potato).